Reading from the N-terminus, the 361-residue chain is MVKLFIGNLPREATEQEIRSLFEQYGKVLECDIIKNYGFVHIEDKTAAEDAIRNLHHYKLHGVNINVEASKNKSKASTKLHVGNISPTCTNQELRAKFEEYGPVIECDIVKDYAFVHMERAEDAVEAIRGLDNTEFQGKRMHVQLSTSRLRTAPGMGDQSGCYRCGKEGHWSKECPIDRSGRVADLTEQYNEQYGAVRTPYTMSYGDSLYYNNTYGALDAYYKRCRAARSYEAVAAAAASAYSNYAEQTLSQLPQVQNTAMASHLTSTSLDPYNRHLLPPSGAAAAAAAAAACTAASTSYYGRDRSPLRRATGPVLTVGEGYGYGHDSELSQASAAARNSLYDMARYEREQYADRARYSAF.

2 consecutive RRM domains span residues Val2–Asn72 and Thr78–Ser148. Residue Lys79 forms a Glycyl lysine isopeptide (Lys-Gly) (interchain with G-Cter in SUMO2) linkage. Residue Ser86 is modified to Phosphoserine. The segment at Ser160–Ile177 adopts a CCHC-type zinc-finger fold. Residues Ala196–Phe361 are interaction with TNPO3. Ser306 carries the post-translational modification Phosphoserine.

As to quaternary structure, interacts with TNPO3; the interaction mediates nuclear import of the protein and is disrupted by nuclear Ran bound to GTP. Interacts with EIF4G1 and WT1. Interacts with EIF4A1; the interaction is modulated under stress-induced conditions. Interacts with AGO1. Interacts with AGO2; the interaction occurs under both cell proliferation and differentiation conditions and in an RNA- and phosphorylation-independent manner. Interacts with DDX5; the interaction occurs in an RNA-independent manner. Interacts with RBPMS; the interaction allows cooperative assembly of RNA-bound stable cell-specific alternative splicing regulatory complexes. Post-translationally, phosphorylated. Phosphorylated in vitro on Ser-306 by SRPK1. Phosphorylation on Ser-306 is induced upon cell stress signaling, which alters its subcellular localization and may modulate its activity on IRES-mediated mRNA translation. Phosphorylated. Phosphorylation on Ser-306 is induced upon cell muscle differentiation. In terms of tissue distribution, expressed in the suprachiasmatic nucleus (SCN). Expressed in myocytes; expression gradually increases during muscle cell differentiation (at protein level). Expressed in the suprachiasmatic nucleus (SCN).

The protein resides in the nucleus. Its subcellular location is the nucleolus. The protein localises to the nucleus speckle. It localises to the cytoplasm. It is found in the cytoplasmic granule. In terms of biological role, RNA-binding factor involved in multiple aspects of cellular processes like alternative splicing of pre-mRNA and translation regulation. Modulates alternative 5'-splice site and exon selection. Acts as a muscle cell differentiation-promoting factor. Activates exon skipping of the PTB pre-mRNA during muscle cell differentiation. Antagonizes the activity of the splicing factor PTBP1 to modulate muscle cell-specific exon selection of alpha tropomyosin. Binds to intronic pyrimidine-rich sequence of the TPM1 and MAPT pre-mRNAs. Required for the translational activation of PER1 mRNA in response to circadian clock. Binds directly to the 3'-UTR of the PER1 mRNA. Exerts a suppressive activity on Cap-dependent translation via binding to CU-rich responsive elements within the 3'UTR of mRNAs, a process increased under stress conditions or during myocytes differentiation. Recruits EIF4A1 to stimulate IRES-dependent translation initiation in respons to cellular stress. Associates to internal ribosome entry segment (IRES) in target mRNA species under stress conditions. Plays a role for miRNA-guided RNA cleavage and translation suppression by promoting association of AGO2-containing miRNPs with their cognate target mRNAs. Associates with miRNAs during muscle cell differentiation. Binds preferentially to 5'-CGCGCG[GCA]-3' motif in vitro. The sequence is that of RNA-binding protein 4 (Rbm4) from Mus musculus (Mouse).